The primary structure comprises 715 residues: L-type lectin-domain containing receptor kinase VIII.1 (715 aa).

A signal peptide spans Met-1–Thr-21. Residues Thr-22–Ser-247 are legume-lectin like. The Extracellular segment spans residues Thr-22 to Thr-317. Asn-126 and Asn-195 each carry an N-linked (GlcNAc...) asparagine glycan. Residues Gly-255–Thr-296 form a disordered region. The span at Ser-283–Thr-296 shows a compositional bias: low complexity. A helical membrane pass occupies residues Ile-318–Trp-338. The Cytoplasmic portion of the chain corresponds to Val-339 to Val-715. The Protein kinase domain occupies Phe-376 to Leu-676. Residues Ile-382–Val-390 and Lys-405 each bind ATP. Asp-500 serves as the catalytic Proton acceptor.

It in the C-terminal section; belongs to the protein kinase superfamily. Ser/Thr protein kinase family. In the N-terminal section; belongs to the leguminous lectin family.

The protein localises to the cell membrane. The enzyme catalyses L-seryl-[protein] + ATP = O-phospho-L-seryl-[protein] + ADP + H(+). The catalysed reaction is L-threonyl-[protein] + ATP = O-phospho-L-threonyl-[protein] + ADP + H(+). This Arabidopsis thaliana (Mouse-ear cress) protein is L-type lectin-domain containing receptor kinase VIII.1 (LECRK81).